A 1440-amino-acid chain; its full sequence is MAVSAGALAFPALSVRATLNPEIKDEQANISSTTSSSQKFTYSRASPAVRWPHLNLREIYDSTPSQTLSSPVSPIAGTPDSGDVVDSIASREEQKTKDETAVATRRRRVKKMNKVALIKAKDWRERVKFLTDKILSLKSNQFVADILDARLVQMTPTDYCFVVKSVGQESWQRALEVFEWLNLRHWHSPNARMVAAILGVLGRWNQESLAVEIFTRAEPTVGDRVQVYNAMMGVYSRSGKFSKAQELVDAMRQRGCVPDLISFNTLINARLKSGGLTPNLAVELLDMVRNSGLRPDAITYNTLLSACSRDSNLDGAVKVFEDMEAHRCQPDLWTYNAMISVYGRCGLAAEAERLFMELELKGFFPDAVTYNSLLYAFARERNTEKVKEVYQQMQKMGFGKDEMTYNTIIHMYGKQGQLDLALQLYKDMKGLSGRNPDAITYTVLIDSLGKANRTVEAAALMSEMLDVGIKPTLQTYSALICGYAKAGKREEAEDTFSCMLRSGTKPDNLAYSVMLDVLLRGNETRKAWGLYRDMISDGHTPSYTLYELMILGLMKENRSDDIQKTIRDMEELCGMNPLEISSVLVKGECFDLAARQLKVAITNGYELENDTLLSILGSYSSSGRHSEAFELLEFLKEHASGSKRLITEALIVLHCKVNNLSAALDEYFADPCVHGWCFGSSTMYETLLHCCVANEHYAEASQVFSDLRLSGCEASESVCKSMVVVYCKLGFPETAHQVVNQAETKGFHFACSPMYTDIIEAYGKQKLWQKAESVVGNLRQSGRTPDLKTWNSLMSAYAQCGCYERARAIFNTMMRDGPSPTVESINILLHALCVDGRLEELYVVVEELQDMGFKISKSSILLMLDAFARAGNIFEVKKIYSSMKAAGYLPTIRLYRMMIELLCKGKRVRDAEIMVSEMEEANFKVELAIWNSMLKMYTAIEDYKKTVQVYQRIKETGLEPDETTYNTLIIMYCRDRRPEEGYLLMQQMRNLGLDPKLDTYKSLISAFGKQKCLEQAEQLFEELLSKGLKLDRSFYHTMMKISRDSGSDSKAEKLLQMMKNAGIEPTLATMHLLMVSYSSSGNPQEAEKVLSNLKDTEVELTTLPYSSVIDAYLRSKDYNSGIERLLEMKKEGLEPDHRIWTCFVRAASFSKEKIEVMLLLKALEDIGFDLPIRLLAGRPELLVSEVDGWFEKLKSIEDNAALNFVNALLNLLWAFELRATASWVFQLGIKRGIFSLDVFRVADKDWGADFRRLSGGAALVALTLWLDHMQDASLEGYPESPKSVVLITGTAEYNGISLDKTLKACLWEMGSPFLPCKTRTGLLVAKAHSLRMWLKDSPFCFDLELKDSVSLPESNSMDLIDGCFIRRGLVPAFNHIKERLGGFVSPKKFSRLALLPDEMRERVIKTDIEGHRQKLEKMKKKKMGNETNGINTRRKFVRSK.

A chloroplast-targeting transit peptide spans 1-44; sequence MAVSAGALAFPALSVRATLNPEIKDEQANISSTTSSSQKFTYSR. A compositionally biased stretch (polar residues) spans 63–72; it reads TPSQTLSSPV. The interval 63–84 is disordered; the sequence is TPSQTLSSPVSPIAGTPDSGDV. PPR repeat units follow at residues 224 to 258, 259 to 295, 296 to 330, 331 to 365, 366 to 400, 401 to 431, 437 to 471, 472 to 506, 507 to 541, 542 to 572, 608 to 638, 643 to 678, 680 to 714, 715 to 749, 751 to 785, 786 to 820, 821 to 855, 856 to 890, 891 to 925, 926 to 960, 961 to 995, 996 to 1030, 1031 to 1065, 1066 to 1100, and 1101 to 1135; these read RVQV…GCVP, DLIS…GLRP, DAIT…RCQP, DLWT…GFFP, DAVT…GFGK, DEMT…MKGL, DAIT…GIKP, TLQT…GTKP, DNLA…GHTP, SYTL…MEEL, ENDT…LKEH, KRLI…GWCF, SSTM…GCEA, SESV…GFHF, CSPM…GRTP, DLKT…GPSP, TVES…GFKI, SKSS…GYLP, TIRL…NFKV, ELAI…GLEP, DETT…GLDP, KLDT…GLKL, DRSF…GIEP, TLAT…EVEL, and TTLP…GLEP. The interval 1419–1440 is disordered; the sequence is KKKKMGNETNGINTRRKFVRSK.

Belongs to the PPR family. P subfamily.

It localises to the plastid. It is found in the chloroplast. Functionally, may play a role in embryogenesis. This is Pentatricopeptide repeat-containing protein At3g18110, chloroplastic (EMB1270) from Arabidopsis thaliana (Mouse-ear cress).